A 176-amino-acid polypeptide reads, in one-letter code: Protein Dr1 (176 aa).

Ala2 is subject to N-acetylalanine. A Histone-fold domain is found at 12-75 (TIPRAAINKM…ISPEHVIQAL (64 aa)). Positions 100-103 (KRRK) match the Nuclear localization signal motif. Phosphoserine occurs at positions 105, 106, 166, and 167. The segment covering 152 to 167 (QLAAASASASNQAGSS) has biased composition (low complexity). The disordered stretch occupies residues 152–176 (QLAAASASASNQAGSSQDEEDDDDI).

Belongs to the NC2 beta/DR1 family. As to quaternary structure, heterodimer with DRAP1. DR1 exists in solution as a homotetramer that dissociates during interaction with TBP and then, after complexing with TBP, reassociates at a slow rate, to reconstitute the tetramer. Interacts with NFIL3. Component of the ADA2A-containing complex (ATAC), composed of KAT14, KAT2A, TADA2L, TADA3L, ZZ3, MBIP, WDR5, YEATS2, CCDC101 and DR1. In terms of processing, phosphorylation regulates its interaction with TBP. Not phosphorylated when bound to DRAP1.

Its subcellular location is the nucleus. In terms of biological role, the association of the DR1/DRAP1 heterodimer with TBP results in a functional repression of both activated and basal transcription of class II genes. This interaction precludes the formation of a transcription-competent complex by inhibiting the association of TFIIA and/or TFIIB with TBP. Can bind to DNA on its own. Component of the ATAC complex, a complex with histone acetyltransferase activity on histones H3 and H4. The sequence is that of Protein Dr1 (DR1) from Homo sapiens (Human).